A 77-amino-acid polypeptide reads, in one-letter code: U8-lycotoxin-Ls1q (77 aa).

Positions 1-20 are cleaved as a signal peptide; sequence MKLMIFAGLVLFAIVSLIEA. The propeptide occupies 21 to 26; sequence QAEHEK.

It belongs to the neurotoxin 19 (CSTX) family. 08 (U8-Lctx) subfamily. Contains 4 disulfide bonds. In terms of tissue distribution, expressed by the venom gland.

The protein localises to the secreted. This chain is U8-lycotoxin-Ls1q, found in Lycosa singoriensis (Wolf spider).